A 210-amino-acid chain; its full sequence is Stress-response A/B barrel domain-containing protein DABB1 (210 aa).

2 Stress-response A/B barrel domains span residues 5-100 (VEHV…AVDW) and 116-204 (IGKI…VVEF).

In terms of assembly, homodimer.

Its subcellular location is the cytoplasm. It localises to the cytosol. Its function is as follows. Involved in defense against fungal pathogens. Possesses antifungal activity against diverse pathogenic fungi. The polypeptide is Stress-response A/B barrel domain-containing protein DABB1 (Arabidopsis thaliana (Mouse-ear cress)).